The primary structure comprises 584 residues: DNA damage-binding protein 2 (584 aa).

The tract at residues 1–87 is disordered; sequence MGPTTRARFV…PVAAAARSGR (87 aa). The span at 8-20 shows a compositional bias: basic residues; that stretch reads RFVHNRRRRRRRG. 2 stretches are compositionally biased toward acidic residues: residues 25–35 and 45–66; these read PDDDDEEEDQQ and DEGEEDAEEEGSGEVDDDDGEA. The CCHC-type zinc-finger motif lies at 122-140; it reads KPCFLCKMPGGHTTLTCPH. WD repeat units lie at residues 192–232, 236–278, 288–327, 333–373, 378–418, 438–481, and 484–523; these read FHQR…EKIT, VHSC…SLLN, STWRMIYGMDFNSDKGLLLVADSFGFLHLLDRRLKARIGD, KKGS…PNSA, AHGR…LESP, EWDP…LAEV, and PDITTISPVNKLHPRDDILASGSSRSIFIWKPKTESDATE. The short motif at 351–366 is the DWD box element; sequence LLSSGNDHYARIWDTR. The segment covering 517–532 has biased composition (basic and acidic residues); it reads TESDATEERNREKAKE. The disordered stretch occupies residues 517 to 584; it reads TESDATEERN…TIKGKGKSKV (68 aa). Basic residues predominate over residues 562-584; it reads KKKKKAKKTRFTHTIKGKGKSKV.

The protein belongs to the WD repeat DDB2/WDR76 family. Component of the UV-DDB complex, which is composed of DDB1 and DDB2. As to expression, expressed in proliferating tissues such as shoot apical meristem (SAM), root tips and young leaves. Not detected in mature leaves.

Its subcellular location is the nucleus. Functionally, required for DNA repair. Binds to DDB1 to form the UV-damaged DNA-binding protein complex (the UV-DDB complex). The UV-DDB complex may recognize UV-induced DNA damage and recruit proteins of the nucleotide excision repair pathway (the NER pathway) to initiate DNA repair. May function as the substrate recognition module for a DCX (DDB1-CUL4-X-box) E3 ubiquitin-protein ligase complex. This Oryza sativa subsp. japonica (Rice) protein is DNA damage-binding protein 2.